The following is a 320-amino-acid chain: Beta-carotene 3-hydroxylase, chloroplastic (320 aa).

The N-terminal 78 residues, 1-78, are a transit peptide targeting the chloroplast; that stretch reads METQFLVSGR…EKELRGKLVV (78 aa). Transmembrane regions (helical) follow at residues 118–138 and 152–172; these read YLVA…LSVY and LSEM…MEFW. The region spanning 165 to 292 is the Fatty acid hydroxylase domain; that stretch reads AAVGMEFWAR…KFNGVPYGLF (128 aa). The short motif at 177-182 is the Histidine box-1 element; it reads HEALWH. The Histidine box-2 motif lies at 189 to 193; it reads HESHH. Helical transmembrane passes span 204 to 224 and 228 to 248; these read DIFA…GFFH and IPGL…AYMF. Positions 250 to 255 match the Histidine box-3 motif; that stretch reads HDGLVH. Positions 276-280 match the Histidine box-4 motif; sequence HTLHH.

The protein belongs to the sterol desaturase family.

The protein localises to the plastid. It localises to the chloroplast membrane. The enzyme catalyses all-trans-beta-carotene + 4 reduced [2Fe-2S]-[ferredoxin] + 2 O2 + 4 H(+) = all-trans-zeaxanthin + 4 oxidized [2Fe-2S]-[ferredoxin] + 2 H2O. Its function is as follows. Nonheme diiron monooxygenase involved in the biosynthesis of xanthophylls. Specific for beta-ring hydroxylations of beta-carotene. Uses ferredoxin as an electron donor. In Gentiana lutea (Yellow gentian), this protein is Beta-carotene 3-hydroxylase, chloroplastic (BHY).